We begin with the raw amino-acid sequence, 396 residues long: Ribosomal RNA large subunit methyltransferase I (396 aa).

Residues 2–79 (AIRIKLKPGR…REEEIDREFF (78 aa)) form the PUA domain.

It belongs to the methyltransferase superfamily. RlmI family.

Its subcellular location is the cytoplasm. It catalyses the reaction cytidine(1962) in 23S rRNA + S-adenosyl-L-methionine = 5-methylcytidine(1962) in 23S rRNA + S-adenosyl-L-homocysteine + H(+). In terms of biological role, specifically methylates the cytosine at position 1962 (m5C1962) of 23S rRNA. The protein is Ribosomal RNA large subunit methyltransferase I of Shewanella baltica (strain OS155 / ATCC BAA-1091).